The following is a 294-amino-acid chain: ATP synthase gamma chain (294 aa).

The protein belongs to the ATPase gamma chain family. As to quaternary structure, F-type ATPases have 2 components, CF(1) - the catalytic core - and CF(0) - the membrane proton channel. CF(1) has five subunits: alpha(3), beta(3), gamma(1), delta(1), epsilon(1). CF(0) has three main subunits: a, b and c.

It is found in the cell inner membrane. In terms of biological role, produces ATP from ADP in the presence of a proton gradient across the membrane. The gamma chain is believed to be important in regulating ATPase activity and the flow of protons through the CF(0) complex. This chain is ATP synthase gamma chain, found in Parvibaculum lavamentivorans (strain DS-1 / DSM 13023 / NCIMB 13966).